The following is a 437-amino-acid chain: Adenylosuccinate synthetase (437 aa).

GTP is bound by residues 12–18 and 40–42; these read GDEGKGK and GHT. Catalysis depends on aspartate 13, which acts as the Proton acceptor. Residues aspartate 13 and glycine 40 each contribute to the Mg(2+) site. Residues 13 to 16, 38 to 41, threonine 131, arginine 145, glutamine 225, and threonine 240 contribute to the IMP site; these read DEGK and NAGH. Histidine 41 serves as the catalytic Proton donor. Positions 281–304 are disordered; that stretch reads TELLGADGKPDADGERLGTRGHEF. Over residues 288–303 the composition is skewed to basic and acidic residues; the sequence is GKPDADGERLGTRGHE. 306 to 312 serves as a coordination point for substrate; the sequence is TTTGRQR. Arginine 310 is an IMP binding site. GTP contacts are provided by residues arginine 312, 338–340, and 420–422; these read KLD and STS.

The protein belongs to the adenylosuccinate synthetase family. As to quaternary structure, homodimer. Requires Mg(2+) as cofactor.

Its subcellular location is the cytoplasm. It catalyses the reaction IMP + L-aspartate + GTP = N(6)-(1,2-dicarboxyethyl)-AMP + GDP + phosphate + 2 H(+). It functions in the pathway purine metabolism; AMP biosynthesis via de novo pathway; AMP from IMP: step 1/2. Plays an important role in the de novo pathway of purine nucleotide biosynthesis. Catalyzes the first committed step in the biosynthesis of AMP from IMP. The chain is Adenylosuccinate synthetase from Ruegeria sp. (strain TM1040) (Silicibacter sp.).